The primary structure comprises 267 residues: Glutamate 5-kinase (267 aa).

K14 lines the ATP pocket. S54, D141, and N157 together coordinate substrate. ATP-binding positions include 177–178 and 219–225; these read SD and TGGMLSK.

The protein belongs to the glutamate 5-kinase family.

It localises to the cytoplasm. The enzyme catalyses L-glutamate + ATP = L-glutamyl 5-phosphate + ADP. The protein operates within amino-acid biosynthesis; L-proline biosynthesis; L-glutamate 5-semialdehyde from L-glutamate: step 1/2. Catalyzes the transfer of a phosphate group to glutamate to form L-glutamate 5-phosphate. The chain is Glutamate 5-kinase from Streptococcus agalactiae serotype Ia (strain ATCC 27591 / A909 / CDC SS700).